A 320-amino-acid polypeptide reads, in one-letter code: Aspartate carbamoyltransferase catalytic subunit (320 aa).

Carbamoyl phosphate contacts are provided by Arg-57 and Thr-58. Lys-85 contributes to the L-aspartate binding site. The carbamoyl phosphate site is built by Arg-107, His-141, and Gln-144. Arg-174 and Arg-228 together coordinate L-aspartate. 2 residues coordinate carbamoyl phosphate: Gly-269 and Pro-270.

The protein belongs to the aspartate/ornithine carbamoyltransferase superfamily. ATCase family. As to quaternary structure, heterododecamer (2C3:3R2) of six catalytic PyrB chains organized as two trimers (C3), and six regulatory PyrI chains organized as three dimers (R2).

It carries out the reaction carbamoyl phosphate + L-aspartate = N-carbamoyl-L-aspartate + phosphate + H(+). It participates in pyrimidine metabolism; UMP biosynthesis via de novo pathway; (S)-dihydroorotate from bicarbonate: step 2/3. Its function is as follows. Catalyzes the condensation of carbamoyl phosphate and aspartate to form carbamoyl aspartate and inorganic phosphate, the committed step in the de novo pyrimidine nucleotide biosynthesis pathway. This Mycobacterium ulcerans (strain Agy99) protein is Aspartate carbamoyltransferase catalytic subunit.